Reading from the N-terminus, the 308-residue chain is Eukaryotic translation initiation factor 3 subunit G (308 aa).

The interval 1-23 (MAPVAAPSTSQPAGGKPMNWADE) is disordered. The 79-residue stretch at 225–303 (PTLRVTNLSE…LILSCQWSLP (79 aa)) folds into the RRM domain.

The protein belongs to the eIF-3 subunit G family. Component of the eukaryotic translation initiation factor 3 (eIF-3) complex.

The protein resides in the cytoplasm. Functionally, RNA-binding component of the eukaryotic translation initiation factor 3 (eIF-3) complex, which is involved in protein synthesis of a specialized repertoire of mRNAs and, together with other initiation factors, stimulates binding of mRNA and methionyl-tRNAi to the 40S ribosome. The eIF-3 complex specifically targets and initiates translation of a subset of mRNAs involved in cell proliferation. This subunit can bind 18S rRNA. The protein is Eukaryotic translation initiation factor 3 subunit G of Mycosarcoma maydis (Corn smut fungus).